A 445-amino-acid chain; its full sequence is Trigger factor (445 aa).

The PPIase FKBP-type domain maps to 162-247 (GDQVTIDAIG…IKAVHTAEPT (86 aa)).

The protein belongs to the FKBP-type PPIase family. Tig subfamily.

The protein resides in the cytoplasm. The catalysed reaction is [protein]-peptidylproline (omega=180) = [protein]-peptidylproline (omega=0). In terms of biological role, involved in protein export. Acts as a chaperone by maintaining the newly synthesized protein in an open conformation. Functions as a peptidyl-prolyl cis-trans isomerase. This is Trigger factor from Rickettsia peacockii (strain Rustic).